Consider the following 267-residue polypeptide: Membrane-spanning 4-domains subfamily A member 12 (267 aa).

The Cytoplasmic segment spans residues 1 to 91 (MMSSKPTSHA…MNFKEEAKAL (91 aa)). A helical membrane pass occupies residues 92–112 (GVIQIMVGLMHIGFGIVLCLI). Topologically, residues 113 to 120 (SFSFREVL) are extracellular. The helical transmembrane segment at 121 to 141 (GFASTAVIGGYPFWGGLSFII) threads the bilayer. The Cytoplasmic portion of the chain corresponds to 142–160 (SGSLSVSASKELSRCLVKG). Residues 161–181 (SLGMNIVSSILAFIGVILLLV) traverse the membrane as a helical segment. The Extracellular portion of the chain corresponds to 182 to 200 (DMCINGVAGQDYWAVLSGK). Residues 201 to 221 (GISATLMIFSLLEFFVACATA) form a helical membrane-spanning segment. At 222–267 (HFANQANTTTNMSVLVIPNMYESNPVTPASSSAPPRCNNYSANAPK) the chain is on the cytoplasmic side. The tract at residues 248 to 267 (TPASSSAPPRCNNYSANAPK) is disordered.

It belongs to the MS4A family.

It localises to the membrane. In terms of biological role, may be involved in signal transduction as a component of a multimeric receptor complex. This chain is Membrane-spanning 4-domains subfamily A member 12 (MS4A12), found in Homo sapiens (Human).